Reading from the N-terminus, the 542-residue chain is Putative inactive cadmium/zinc-transporting ATPase HMA3 (542 aa).

Residues 1 to 89 (MAEGEESKKM…VRPYGETSLK (89 aa)) are Cytoplasmic-facing. One can recognise an HMA domain in the interval 13–79 (QTSYFDVVGI…ALNQARLEAS (67 aa)). Residues 90-111 (SQWPSPFAIVSGVLLVLSFFKY) traverse the membrane as a helical segment. The Extracellular portion of the chain corresponds to 112–114 (FYS). Residues 115 to 134 (PLEWLAIVAVVAGVFPILAK) traverse the membrane as a helical segment. Residues 135 to 141 (AVASVTR) are Cytoplasmic-facing. Residues 142–162 (FRLDINALTLIAVIATLCMQD) traverse the membrane as a helical segment. Residue Phe-163 is a topological domain, extracellular. Residues 164 to 184 (TEAATIVFLFSVADWLESSAA) traverse the membrane as a helical segment. Over 185–310 (HKASIVMSSL…QTKTQRFIDK (126 aa)) the chain is Cytoplasmic. The chain crosses the membrane as a helical span at residues 311-333 (CSRYYTPAVVVSAACFAVIPVLL). Residues 334–341 (KVQDLSHW) are Extracellular-facing. A helical transmembrane segment spans residues 342 to 359 (FHLALVVLVSGCPCGLIL). The Cytoplasmic segment spans residues 360–542 (STPVATFCAL…VAQALKELKS (183 aa)).

It belongs to the cation transport ATPase (P-type) (TC 3.A.3) family. Type IB subfamily.

The protein localises to the membrane. This Arabidopsis thaliana (Mouse-ear cress) protein is Putative inactive cadmium/zinc-transporting ATPase HMA3 (HMA3).